The sequence spans 553 residues: Glucose-6-phosphate isomerase (553 aa).

Glu355 (proton donor) is an active-site residue. Residues His386 and Lys513 contribute to the active site.

This sequence belongs to the GPI family.

The protein localises to the cytoplasm. It carries out the reaction alpha-D-glucose 6-phosphate = beta-D-fructose 6-phosphate. The protein operates within carbohydrate biosynthesis; gluconeogenesis. It functions in the pathway carbohydrate degradation; glycolysis; D-glyceraldehyde 3-phosphate and glycerone phosphate from D-glucose: step 2/4. In terms of biological role, catalyzes the reversible isomerization of glucose-6-phosphate to fructose-6-phosphate. The protein is Glucose-6-phosphate isomerase of Baumannia cicadellinicola subsp. Homalodisca coagulata.